Here is a 108-residue protein sequence, read N- to C-terminus: Phosphoribosyl-ATP pyrophosphatase (108 aa).

This sequence belongs to the PRA-PH family.

It localises to the cytoplasm. It catalyses the reaction 1-(5-phospho-beta-D-ribosyl)-ATP + H2O = 1-(5-phospho-beta-D-ribosyl)-5'-AMP + diphosphate + H(+). It participates in amino-acid biosynthesis; L-histidine biosynthesis; L-histidine from 5-phospho-alpha-D-ribose 1-diphosphate: step 2/9. The chain is Phosphoribosyl-ATP pyrophosphatase from Thiobacillus denitrificans (strain ATCC 25259 / T1).